Here is a 111-residue protein sequence, read N- to C-terminus: Protein IDA-LIKE 5 (111 aa).

The N-terminal stretch at 1–27 (MGNKRIKAMMILVVMIMMVFSWRICEA) is a signal peptide. Basic residues predominate over residues 46 to 56 (RRPNPRNHHHQ). The segment at 46-65 (RRPNPRNHHHQNQGFNGDDY) is disordered.

In terms of tissue distribution, expressed mainly in flowers. Lower levels in buds and seedlings. Detected in vascular tissues and in hydathodes.

It is found in the secreted. It localises to the extracellular space. May be involved in floral abscission. The polypeptide is Protein IDA-LIKE 5 (IDL5) (Arabidopsis thaliana (Mouse-ear cress)).